The chain runs to 68 residues: Glucagon-1 (68 aa).

Belongs to the glucagon family.

It is found in the secreted. Functionally, promotes hydrolysis of glycogen and lipids, and raises the blood sugar level. The chain is Glucagon-1 (gcg) from Oncorhynchus kisutch (Coho salmon).